A 1234-amino-acid polypeptide reads, in one-letter code: 1-phosphatidylinositol 4,5-bisphosphate phosphodiesterase beta-3 (1234 aa).

N-acetylalanine is present on A2. The PI-PLC X-box domain maps to 318 to 468 (DMTQPLSAYF…LMGRILVKNK (151 aa)). Catalysis depends on residues H332 and H379. Positions 467 to 587 (NKKRHRPSAG…GTASSEVNAT (121 aa)) are disordered. 4 positions are modified to phosphoserine: S474, S490, S495, and S537. A compositionally biased stretch (low complexity) spans 488–515 (EQSNSALSESSAATEPSSPQLGSPSSDS). Over residues 555-567 (REDEEEDEEEEEQ) the composition is skewed to acidic residues. Residues 576–587 (DEGTASSEVNAT) are compositionally biased toward polar residues. One can recognise a PI-PLC Y-box domain in the interval 590–706 (MSTLVNYIEP…GYLLKPEFMR (117 aa)). A C2 domain is found at 707 to 835 (RPDKSFDPFT…RNEANQPLCL (129 aa)). Residues 887–908 (AGQETCQDTQSQQLGSQPSSNP) are compositionally biased toward polar residues. Residues 887–937 (AGQETCQDTQSQQLGSQPSSNPTPSPLDASPRRPPGPTTSPASTSLSSPGQ) form a disordered region. Residues 925 to 936 (TSPASTSLSSPG) are compositionally biased toward low complexity. A phosphoserine mark is found at S926 and S1105. The interval 1198-1234 (GLGDGPLVACASNGHAPGSSGHLSGADSESQEENTQL) is disordered. The tract at residues 1231–1234 (NTQL) is interaction with SHANK2.

As to quaternary structure, interacts with SHANK2. Interacts with LPAR2. Requires Ca(2+) as cofactor.

It localises to the cytoplasm. Its subcellular location is the membrane. The protein resides in the nucleus. It carries out the reaction a 1,2-diacyl-sn-glycero-3-phospho-(1D-myo-inositol-4,5-bisphosphate) + H2O = 1D-myo-inositol 1,4,5-trisphosphate + a 1,2-diacyl-sn-glycerol + H(+). The catalysed reaction is a 1,2-diacyl-sn-glycero-3-phospho-(1D-myo-inositol) + H2O = 1D-myo-inositol 1-phosphate + a 1,2-diacyl-sn-glycerol + H(+). Activated by G(q)/G(11) G alpha proteins in response to ligand-binding to G protein-coupled receptors. Its function is as follows. Catalyzes the production of the second messenger molecules diacylglycerol (DAG) and inositol 1,4,5-trisphosphate (IP3). Key transducer of G protein-coupled receptor signaling: activated by G(q)/G(11) G alpha proteins downstream of G protein-coupled receptors activation. In neutrophils, participates in a phospholipase C-activating N-formyl peptide-activated GPCR (G protein-coupled receptor) signaling pathway by promoting RASGRP4 activation by DAG, to promote neutrophil functional responses. This chain is 1-phosphatidylinositol 4,5-bisphosphate phosphodiesterase beta-3, found in Homo sapiens (Human).